The primary structure comprises 104 residues: NADH dehydrogenase [ubiquinone] flavoprotein 3, mitochondrial (104 aa).

The N-terminal 35 residues, 1-35, are a transit peptide targeting the mitochondrion; it reads MAVSLLLRGGRIRALKAVLLEARVFPGELVSVVRL. Positions 38 to 50 are enriched in basic and acidic residues; sequence ESEKSAKEKELHP. Residues 38-68 form a disordered region; sequence ESEKSAKEKELHPKTQSVLKEPEPTDTTTYK. Phosphoserine is present on Ser101.

It belongs to the complex I NDUFV3 subunit family. Complex I is composed of 45 different subunits. This is a component of the flavoprotein-sulfur (FP) fragment of the enzyme.

It is found in the mitochondrion inner membrane. Functionally, accessory subunit of the mitochondrial membrane respiratory chain NADH dehydrogenase (Complex I), that is believed not to be involved in catalysis. Complex I functions in the transfer of electrons from NADH to the respiratory chain. The immediate electron acceptor for the enzyme is believed to be ubiquinone. May be the terminally assembled subunit of Complex I. This is NADH dehydrogenase [ubiquinone] flavoprotein 3, mitochondrial (Ndufv3) from Mus musculus (Mouse).